Here is a 226-residue protein sequence, read N- to C-terminus: MKITFLGHAAFLVEEEGLKFLFDPFLTGNPQAKIRPDEITADYILVSHGHGDHLGDTVAIAQRSGATVIGVFELCNFLSRQNVKTHPMHIGGRYNFGQFTVKLTPAWHGSSFGEGPVEYLGNPCGFLLSVGGKTLYHTGDTGLFYDMKLLAEIDPVDILLVPIGGNFTMDVKDALKALELVKPKYAIPMHYNTWPVIAADVGEFQDKGRALGVAIKVLNPGEMVVL.

It belongs to the UPF0173 family.

This is UPF0173 metal-dependent hydrolase CHY_0920 from Carboxydothermus hydrogenoformans (strain ATCC BAA-161 / DSM 6008 / Z-2901).